The chain runs to 725 residues: mRNA decay activator protein ZFP36L3 (725 aa).

The span at methionine 1–glycine 25 shows a compositional bias: low complexity. The interval methionine 1–threonine 119 is disordered. Composition is skewed to polar residues over residues alanine 42–alanine 72 and histidine 100–threonine 119. 2 C3H1-type zinc fingers span residues arginine 122 to arginine 150 and lysine 160 to proline 188. Residues valine 193–serine 711 are necessary for cytoplasmic localization. The disordered stretch occupies residues serine 276–glycine 310. The span at histidine 280–proline 294 shows a compositional bias: basic and acidic residues. 4 consecutive transmembrane segments (helical) span residues leucine 380–leucine 400, alanine 420–methionine 440, alanine 441–glycine 461, and alanine 468–valine 488. The tract at residues aspartate 686–asparagine 709 is disordered. Low complexity predominate over residues arginine 693–glutamate 702.

As to expression, expressed in placenta and extraembryonic tissues (at protein level). Not detected in embryos and fetus.

The protein localises to the cytoplasm. Its subcellular location is the membrane. Functionally, placenta-specific zinc-finger RNA-binding protein that destabilizes cytoplasmic AU-rich element (ARE)-containing mRNA transcripts by promoting their poly(A) tail removal or deadenylation, and hence provide a mechanism for attenuating protein synthesis. Binds to the 3'-UTR ARE of placental target mRNAs, such as TNF, HBEGF and LIPG. Involved in placental expression of many genes important for normal placental physiology. The chain is mRNA decay activator protein ZFP36L3 from Mus musculus (Mouse).